The sequence spans 319 residues: Probable NAD(P)H-dependent D-xylose reductase xyl1 (319 aa).

Residue Tyr-50 is the Proton donor of the active site. His-112 provides a ligand contact to substrate. NAD(+) is bound by residues 166–167, 215–224, and 271–281; these read SN, SSFGPLSFLE, and KSNNPARLLQN.

This sequence belongs to the aldo/keto reductase family.

It carries out the reaction xylitol + NAD(+) = D-xylose + NADH + H(+). It catalyses the reaction xylitol + NADP(+) = D-xylose + NADPH + H(+). It participates in carbohydrate metabolism; D-xylose degradation. Its function is as follows. Catalyzes the initial reaction in the xylose utilization pathway by reducing D-xylose into xylitol. Xylose is a major component of hemicelluloses such as xylan. Most fungi utilize D-xylose via three enzymatic reactions, xylose reductase (XR), xylitol dehydrogenase (XDH), and xylulokinase, to form xylulose 5-phosphate, which enters pentose phosphate pathway. In Emericella nidulans (strain FGSC A4 / ATCC 38163 / CBS 112.46 / NRRL 194 / M139) (Aspergillus nidulans), this protein is Probable NAD(P)H-dependent D-xylose reductase xyl1 (xyl1).